The primary structure comprises 222 residues: Triosephosphate isomerase (222 aa).

Substrate is bound at residue 9-11 (NFK). Residue H93 is the Electrophile of the active site. E141 functions as the Proton acceptor in the catalytic mechanism. Residues I146, G181, and 202–203 (AS) contribute to the substrate site.

This sequence belongs to the triosephosphate isomerase family. As to quaternary structure, homotetramer; dimer of dimers.

The protein localises to the cytoplasm. The enzyme catalyses D-glyceraldehyde 3-phosphate = dihydroxyacetone phosphate. The protein operates within carbohydrate biosynthesis; gluconeogenesis. It participates in carbohydrate degradation; glycolysis; D-glyceraldehyde 3-phosphate from glycerone phosphate: step 1/1. Involved in the gluconeogenesis. Catalyzes stereospecifically the conversion of dihydroxyacetone phosphate (DHAP) to D-glyceraldehyde-3-phosphate (G3P). The sequence is that of Triosephosphate isomerase from Methanothermus fervidus (strain ATCC 43054 / DSM 2088 / JCM 10308 / V24 S).